The following is a 689-amino-acid chain: Shutoff protein (689 aa).

The tract at residues 1-24 (MSEEPVSGTTVEIEEDTHTPPNSP) is disordered. Residues 226–289 (VMNNLLVKRA…SVLVTVVLEC (64 aa)) are binding to host EIF4G. The region spanning 292 to 410 (RLFTSKDMVK…PLYTETSQRL (119 aa)) is the RRM domain. 2 positions are modified to phosphotyrosine; by host: tyrosine 309 and tyrosine 627. The tract at residues 625–689 (GQYLDPHTGE…GEPDVRGTTS (65 aa)) is disordered. A compositionally biased stretch (basic and acidic residues) spans 645–655 (SGHEFQGDGRH). Positions 656–675 (REPKRGRHFRQRGGPRKPPR) are enriched in basic residues. Residues 678-689 (AGGEPDVRGTTS) show a composition bias toward basic and acidic residues.

The protein belongs to the adenoviridae shutoff protein family. In terms of assembly, monomer. Interacts with hexon protein; this interaction allows chaperoning and trimerization of hexon proteins. Interacts (via N-terminus) with host initiation factor EIF4G (via C-terminus). Interacts (via RRM domain) with viral mRNAs that contain the tripartite leader; this interaction allows ribosome shunting and expression of viral late mRNAs. Post-translationally, might be cleaved by the viral protease. Phosphorylated. Tyrosine phosphorylation enhances preferential binding to tripartite leader mRNAs and allows ribosome shunting. In terms of processing, methylated. Asymmetric dimethylation by host PRMT1 of the Arg/Gly-rich region may regulate shutoff protein binding to hexon and promote the capsid assembly in the nucleus.

It is found in the host cytoplasm. Functionally, protein that inhibits host translation while promoting late viral translation by ribosome shunting. Blocks host cap-dependent translation by binding to eIF4G, displacing MKNK1 from cap initiation complexes and preventing EIF4E phosphorylation. Binds to the tripartite leader sequence of viral late mRNAs and recruits host eIF4G, PABPC1/poly-A binding protein and 40S ribosomes subunits on viral mRNAs, allowing ribosome shunting and efficient translation of late viral mRNAs even though conventional translation via ribosome scanning from the cap has been shut off in the host cell. During assembly, acts as a chaperone protein that helps hexon proteins assembly into trimers. This chain is Shutoff protein, found in Canis lupus familiaris (Dog).